The following is a 558-amino-acid chain: Urocanate hydratase (558 aa).

NAD(+)-binding positions include 54 to 55 (GG), Q132, 178 to 180 (GMG), E198, 244 to 245 (NA), 265 to 269 (QTSAH), 275 to 276 (YL), and Y324. Residue C412 is part of the active site. Position 494 (G494) interacts with NAD(+).

It belongs to the urocanase family. NAD(+) is required as a cofactor.

It localises to the cytoplasm. The enzyme catalyses 4-imidazolone-5-propanoate = trans-urocanate + H2O. It participates in amino-acid degradation; L-histidine degradation into L-glutamate; N-formimidoyl-L-glutamate from L-histidine: step 2/3. Its function is as follows. Catalyzes the conversion of urocanate to 4-imidazolone-5-propionate. This is Urocanate hydratase from Acinetobacter baumannii (strain ACICU).